The primary structure comprises 111 residues: Large ribosomal subunit protein uL22 (111 aa).

This sequence belongs to the universal ribosomal protein uL22 family. In terms of assembly, part of the 50S ribosomal subunit.

In terms of biological role, this protein binds specifically to 23S rRNA; its binding is stimulated by other ribosomal proteins, e.g. L4, L17, and L20. It is important during the early stages of 50S assembly. It makes multiple contacts with different domains of the 23S rRNA in the assembled 50S subunit and ribosome. Its function is as follows. The globular domain of the protein is located near the polypeptide exit tunnel on the outside of the subunit, while an extended beta-hairpin is found that lines the wall of the exit tunnel in the center of the 70S ribosome. This chain is Large ribosomal subunit protein uL22, found in Acholeplasma laidlawii (strain PG-8A).